A 154-amino-acid chain; its full sequence is Aspartate carbamoyltransferase regulatory chain (154 aa).

Positions 109, 114, 138, and 141 each coordinate Zn(2+).

The protein belongs to the PyrI family. As to quaternary structure, contains catalytic and regulatory chains. Zn(2+) serves as cofactor.

In terms of biological role, involved in allosteric regulation of aspartate carbamoyltransferase. The sequence is that of Aspartate carbamoyltransferase regulatory chain from Pectobacterium carotovorum subsp. carotovorum (strain PC1).